A 134-amino-acid chain; its full sequence is Large ribosomal subunit protein uL16c (134 aa).

Residues methionine 1–methionine 17 are compositionally biased toward basic residues. The interval methionine 1–serine 22 is disordered.

It belongs to the universal ribosomal protein uL16 family. As to quaternary structure, part of the 50S ribosomal subunit.

The protein resides in the plastid. Its subcellular location is the chloroplast. This Solanum tuberosum (Potato) protein is Large ribosomal subunit protein uL16c.